The sequence spans 902 residues: Leucine-rich repeat-containing G-protein coupled receptor 5A (902 aa).

The signal sequence occupies residues 1–22 (MDTSRTSLFLCSVLYSLQLVGS). Over 23 to 557 (ARPGKQHRSC…DHLFGSWLTR (535 aa)) the chain is Extracellular. 2 disulfide bridges follow: C32–C38 and C36–C49. An LRRNT domain is found at 32–61 (CPTPCECEQDGMLVRVDCSDRGLTGLPRNI). 17 LRR repeats span residues 41–61 (DGMLVRVDCSDRGLTGLPRNI), 62–85 (SIFTSYLDLSMNNITKLPSNALHN), 86–109 (LHFLEELRLAGNDLTYIPKGAFAG), 111–133 (GSLKVLMLQNNLLRQVPSEALQN), 134–157 (LRSLQSLRLDANHISYVPPSSFNG), 159–181 (FSLRHLWLDDNSLTEIPVRALES), 182–205 (LSALQAMTLALNKIHHIPDYAFGN), 207–229 (SSLVVLHLHNNRIYSLGKKCFDG), 230–253 (LHSLETLDLNYNNLDEFPAAIKTL), 254–276 (KNLKELGFHSNNIKSIPEQAFIG), 278–300 (PSLITTHFYDNPIQHVGRSAFQH), 301–324 (LPELRTLILNGASQITEFPDLTGT), 325–347 (TSLESLTLTGAQLVYLPSAVCNQ), 348–372 (LPNLKVIDLSYNHIKDLPSFSGCQR), 374–393 (QKIDLRHNEVYEIRFTTFQQ), 394–417 (LVGLRSLDLAWNKIAVIHPSSFSS), and 418–441 (LPSLIKLDLSSNHLTSFPVTGLHG). 2 N-linked (GlcNAc...) asparagine glycosylation sites follow: N60 and N74. N-linked (GlcNAc...) asparagine glycosylation occurs at N205. A disulfide bond links C345 and C370. C476 and C537 are joined by a disulfide. N-linked (GlcNAc...) asparagine glycosylation occurs at N496. The helical transmembrane segment at 558-578 (IGVWLIVLLSFVCNALVIATV) threads the bilayer. At 579-589 (FRPLSYVPSIK) the chain is on the cytoplasmic side. Residues 590-610 (LLIGLIAIINTLMGLSSGVLA) traverse the membrane as a helical segment. The LRR 18 repeat unit spans residues 598 to 619 (INTLMGLSSGVLATVDALTFGN). At 611–634 (TVDALTFGNFAQYGAWWESGVGCQ) the chain is on the extracellular side. C633 and C708 are oxidised to a cystine. Residues 635–655 (ITGFLSVFAAETSVFLLTVAA) form a helical membrane-spanning segment. Over 656 to 678 (LERGFSIKCTTKFETKSSFLSVK) the chain is Cytoplasmic. Residues 679-699 (LSIVFCFLLSIIIAVSPLMSG) traverse the membrane as a helical segment. Residues 700–718 (STYGTSPFCFPLLFGDPSS) are Extracellular-facing. Residues 719 to 739 (MVFMVALVLLNSLCFLVMTVA) traverse the membrane as a helical segment. At 740-763 (YTKLYCSLEKGELENVWDCSMVKH) the chain is on the cytoplasmic side. The chain crosses the membrane as a helical span at residues 764 to 784 (IALLLFTNCILYCPVAFLSFS). Over 785–798 (SLLNLTFISPEVNK) the chain is Extracellular. 2 N-linked (GlcNAc...) asparagine glycosylation sites follow: N788 and N797. A helical transmembrane segment spans residues 799–819 (SILLLIIPLPACLNPLLYILF). The Cytoplasmic segment spans residues 820-902 (NPHFKEDIGS…LSAVAFVPCH (83 aa)).

It belongs to the G-protein coupled receptor 1 family. Expressed in the developing epithelial stem cells of the intestine.

It localises to the cell membrane. The protein localises to the golgi apparatus. The protein resides in the trans-Golgi network membrane. In terms of biological role, receptor for R-spondins that potentiates the canonical Wnt signaling pathway and acts as a stem cell marker of the intestinal epithelium and the hair follicle. Upon binding to R-spondins (RSPO1, RSPO2, RSPO3 or RSPO4), associates with phosphorylated LRP6 and frizzled receptors that are activated by extracellular Wnt receptors, triggering the canonical Wnt signaling pathway to increase expression of target genes. In contrast to classical G-protein coupled receptors, does not activate heterotrimeric G-proteins to transduce the signal. Involved in the development and/or maintenance of the adult intestinal stem cells during postembryonic development. This is Leucine-rich repeat-containing G-protein coupled receptor 5A (lgr5-a) from Xenopus laevis (African clawed frog).